Here is a 399-residue protein sequence, read N- to C-terminus: Elongation factor Tu (399 aa).

One can recognise a tr-type G domain in the interval 10-209; the sequence is KPHVNIGTIG…EVDAYIPTPE (200 aa). Residues 19 to 26 are G1; sequence GHVDHGKT. Residue 19–26 coordinates GTP; that stretch reads GHVDHGKT. Residue Thr-26 participates in Mg(2+) binding. Residues 60–64 are G2; it reads GITIA. The segment at 81-84 is G3; sequence DCPG. GTP-binding positions include 81–85 and 136–139; these read DCPGH and NKQD. A G4 region spans residues 136–139; it reads NKQD. The segment at 174–176 is G5; that stretch reads SAL.

The protein belongs to the TRAFAC class translation factor GTPase superfamily. Classic translation factor GTPase family. EF-Tu/EF-1A subfamily. As to quaternary structure, monomer.

The protein localises to the cytoplasm. It catalyses the reaction GTP + H2O = GDP + phosphate + H(+). In terms of biological role, GTP hydrolase that promotes the GTP-dependent binding of aminoacyl-tRNA to the A-site of ribosomes during protein biosynthesis. The chain is Elongation factor Tu from Helicobacter pylori (strain Shi470).